The primary structure comprises 235 residues: uncharacterized protein (235 aa).

Positions 1–98 are disordered; it reads MDTKLSVTGA…NKKNTLHYSK (98 aa). Residues Lys16 and Lys35 each participate in a glycyl lysine isopeptide (Lys-Gly) (interchain with G-Cter in ubiquitin) cross-link. Positions 38-50 are enriched in basic residues; that stretch reads NGNKKRNKNRNRN. Basic and acidic residues predominate over residues 51–60; sequence KKTETKEQNE.

This is an uncharacterized protein from Saccharomyces cerevisiae (strain ATCC 204508 / S288c) (Baker's yeast).